The following is a 54-amino-acid chain: DGVKLCDVPSGTWSGHCGSSSKCSQQCKDREHFAYGGACHYQFPSVKCFCKRQC.

4 cysteine pairs are disulfide-bonded: cysteine 6-cysteine 54, cysteine 17-cysteine 39, cysteine 23-cysteine 48, and cysteine 27-cysteine 50.

This sequence belongs to the DEFL family.

It localises to the secreted. Functionally, possesses antifungal activity insensitive to inorganic cations. Causes germ tubes and hyphae to swell and form multiple hyphal buds. Binds to the plasma membrane of the fungus. Has no inhibitory effect on insect gut alpha-amylase. The protein is Defensin-like protein 1 of Heuchera sanguinea (Coralbells).